Reading from the N-terminus, the 46-residue chain is PhoP/PhoQ regulator MgrB (46 aa).

Residues Trp6–Met26 traverse the membrane as a helical segment.

It belongs to the MgrB family. May form homooligomers. Probably interacts with the periplasmic domain of PhoQ.

The protein localises to the cell inner membrane. PhoP-regulated transcription is redox-sensitive, being activated when the periplasm becomes more reducing. MgrB acts between DsbA/DsbB and PhoP/PhoQ in this pathway. Represses PhoP/PhoQ signaling, possibly by binding to the periplasmic domain of PhoQ, altering its activity and that of downstream effector PhoP. The protein is PhoP/PhoQ regulator MgrB of Escherichia coli O6:K15:H31 (strain 536 / UPEC).